A 99-amino-acid polypeptide reads, in one-letter code: Small ribosomal subunit protein uS19 (99 aa).

The tract at residues 77 to 99 is disordered; that stretch reads TRTFHGHSGDKKAKVAKGGPGGR.

This sequence belongs to the universal ribosomal protein uS19 family.

Functionally, protein S19 forms a complex with S13 that binds strongly to the 16S ribosomal RNA. This chain is Small ribosomal subunit protein uS19, found in Sorangium cellulosum (strain So ce56) (Polyangium cellulosum (strain So ce56)).